Consider the following 185-residue polypeptide: Ribosome-recycling factor (185 aa).

It belongs to the RRF family.

The protein localises to the cytoplasm. Responsible for the release of ribosomes from messenger RNA at the termination of protein biosynthesis. May increase the efficiency of translation by recycling ribosomes from one round of translation to another. The chain is Ribosome-recycling factor from Aeromonas salmonicida (strain A449).